Reading from the N-terminus, the 269-residue chain is Putative phosphoenolpyruvate synthase regulatory protein (269 aa).

Residue 149-156 (GVSRSGKT) participates in ADP binding.

Belongs to the pyruvate, phosphate/water dikinase regulatory protein family. PSRP subfamily.

The enzyme catalyses [pyruvate, water dikinase] + ADP = [pyruvate, water dikinase]-phosphate + AMP + H(+). The catalysed reaction is [pyruvate, water dikinase]-phosphate + phosphate + H(+) = [pyruvate, water dikinase] + diphosphate. Bifunctional serine/threonine kinase and phosphorylase involved in the regulation of the phosphoenolpyruvate synthase (PEPS) by catalyzing its phosphorylation/dephosphorylation. The polypeptide is Putative phosphoenolpyruvate synthase regulatory protein (Colwellia psychrerythraea (strain 34H / ATCC BAA-681) (Vibrio psychroerythus)).